A 365-amino-acid chain; its full sequence is Succinyl-diaminopimelate desuccinylase (365 aa).

Histidine 64 serves as a coordination point for Zn(2+). The active site involves aspartate 66. Aspartate 95 is a Zn(2+) binding site. The active-site Proton acceptor is the glutamate 125. Glutamate 126, glutamate 154, and histidine 339 together coordinate Zn(2+).

The protein belongs to the peptidase M20A family. DapE subfamily. As to quaternary structure, homodimer. Zn(2+) serves as cofactor. It depends on Co(2+) as a cofactor.

The catalysed reaction is N-succinyl-(2S,6S)-2,6-diaminopimelate + H2O = (2S,6S)-2,6-diaminopimelate + succinate. The protein operates within amino-acid biosynthesis; L-lysine biosynthesis via DAP pathway; LL-2,6-diaminopimelate from (S)-tetrahydrodipicolinate (succinylase route): step 3/3. In terms of biological role, catalyzes the hydrolysis of N-succinyl-L,L-diaminopimelic acid (SDAP), forming succinate and LL-2,6-diaminopimelate (DAP), an intermediate involved in the bacterial biosynthesis of lysine and meso-diaminopimelic acid, an essential component of bacterial cell walls. This is Succinyl-diaminopimelate desuccinylase from Sulfurimonas denitrificans (strain ATCC 33889 / DSM 1251) (Thiomicrospira denitrificans (strain ATCC 33889 / DSM 1251)).